Reading from the N-terminus, the 393-residue chain is Short-chain dehydrogenase/reductase family 42E member 1 (393 aa).

Tyrosine 152 functions as the Proton acceptor in the catalytic mechanism. Lysine 156 contacts NAD(+). The next 2 helical transmembrane spans lie at 282–302 and 371–391; these read LPLT…FILG and GLLV…SVIL.

It belongs to the 3-beta-HSD family.

The protein resides in the membrane. The sequence is that of Short-chain dehydrogenase/reductase family 42E member 1 (SDR42E1) from Macaca fascicularis (Crab-eating macaque).